The sequence spans 149 residues: Large ribosomal subunit protein bL9 (149 aa).

This sequence belongs to the bacterial ribosomal protein bL9 family.

Binds to the 23S rRNA. This Legionella pneumophila (strain Paris) protein is Large ribosomal subunit protein bL9.